A 165-amino-acid chain; its full sequence is Chorismate pyruvate-lyase (165 aa).

M35, R77, L115, and E156 together coordinate substrate.

The protein belongs to the UbiC family. As to quaternary structure, monomer.

The protein localises to the cytoplasm. It carries out the reaction chorismate = 4-hydroxybenzoate + pyruvate. The protein operates within cofactor biosynthesis; ubiquinone biosynthesis. In terms of biological role, removes the pyruvyl group from chorismate, with concomitant aromatization of the ring, to provide 4-hydroxybenzoate (4HB) for the ubiquinone pathway. This is Chorismate pyruvate-lyase from Salmonella agona (strain SL483).